A 326-amino-acid polypeptide reads, in one-letter code: Mitochondrial glycine transporter (326 aa).

Solcar repeat units follow at residues 45–134 (HPVI…SKQY), 141–225 (PTAL…TRTA), and 237–321 (LIPL…MMAR). 6 helical membrane-spanning segments follow: residues 51–76 (FLCGSISGTCSTLLFQPLDLLKTRLQ), 109–135 (GMSPSIVRCVPGVGIYFGTLYSSKQYF), 147–172 (VILGMGSRSVAGVCMSPITVIKTRYE), 200–223 (GLTATLLRDAPFSGLYLMFYSQTR), 241–267 (INFSCGIFAGVLASLVTQPADVIKTHM), and 296–314 (GSVPRALRRTLMAAMAWTV).

The protein belongs to the mitochondrial carrier (TC 2.A.29) family. SLC25A38 subfamily.

Its subcellular location is the mitochondrion inner membrane. The catalysed reaction is glycine(in) = glycine(out). In terms of biological role, mitochondrial glycine transporter that imports glycine into the mitochondrial matrix. Plays an important role in providing glycine for the first enzymatic step in heme biosynthesis, the condensation of glycine with succinyl-CoA to produce 5-aminolevulinate (ALA) in the mitochondrial matrix. Required during erythropoiesis. Functionally, plays a role as pro-apoptotic protein that induces caspase-dependent apoptosis. This Mus musculus (Mouse) protein is Mitochondrial glycine transporter.